The chain runs to 468 residues: GTPase Der (468 aa).

EngA-type G domains lie at 3-169 and 199-372; these read PVMA…SPPD and IRLA…KAAT. Residues 9–16, 56–60, 119–122, 205–212, 252–256, and 317–320 each bind GTP; these read GRANVGKS, DTGGF, NKAE, GRPNVGKS, DTAGL, and NKWD. A KH-like domain is found at 373-457; the sequence is CKMSTPVLTR…PLRIELKTSH (85 aa).

It belongs to the TRAFAC class TrmE-Era-EngA-EngB-Septin-like GTPase superfamily. EngA (Der) GTPase family. Associates with the 50S ribosomal subunit.

GTPase that plays an essential role in the late steps of ribosome biogenesis. The protein is GTPase Der of Verminephrobacter eiseniae (strain EF01-2).